A 258-amino-acid chain; its full sequence is Uroplakin-1a (258 aa).

At 1–14 the chain is on the cytoplasmic side; the sequence is MASAAAAEAEKGSP. A helical membrane pass occupies residues 15-35; the sequence is VVVGLLVVGNIIILLSGLSLF. Residues 36-59 lie on the Extracellular side of the membrane; it reads AETIWVTADQYRVYPLMGVSGKDD. Residues 60–86 traverse the membrane as a helical segment; that stretch reads VFAGAWIAIFCGFSFFMVASFGVGAAL. The Cytoplasmic segment spans residues 87–91; the sequence is CRRRS. A helical membrane pass occupies residues 92 to 112; the sequence is MVLTYLVLMLIVYIFECASCI. Topologically, residues 113 to 230 are extracellular; that stretch reads TSYTHRDYMV…HIGHAIDSYT (118 aa). N170 is a glycosylation site (N-linked (GlcNAc...) asparagine). The chain crosses the membrane as a helical span at residues 231–252; the sequence is WGISWFGFAILMWTLPVMLIAM. Topologically, residues 253–258 are cytoplasmic; the sequence is YFYTML.

This sequence belongs to the tetraspanin (TM4SF) family. Homodimer; disulfide-linked. Interacts with uroplakin-2 (UPK2). In terms of tissue distribution, high expression restricted to ureteric urothelium (most superficial cells); low expression in prostate. Expression in normal urothelial cells is lost in culture. Some expression in tumor cell lines derived from urothelial malignancies.

It is found in the membrane. Component of the asymmetric unit membrane (AUM); a highly specialized biomembrane elaborated by terminally differentiated urothelial cells. May play an important role in normal bladder epithelial physiology, possibly in regulating membrane permeability of superficial umbrella cells or in stabilizing the apical membrane through AUM/cytoskeletal interactions. This Homo sapiens (Human) protein is Uroplakin-1a (UPK1A).